Reading from the N-terminus, the 205-residue chain is Peroxynitrite isomerase (205 aa).

The disordered stretch occupies residues 1–23; the sequence is MTEPDPAAAEQRPSVGRNLPTFQ. A GXWXGXG motif is present at residues 52 to 58; it reads GVWRGEG. Residues Thr-63, Lys-168, and His-195 each contribute to the heme b site.

This sequence belongs to the nitrobindin family. In terms of assembly, homodimer. Requires heme b as cofactor.

It carries out the reaction peroxynitrite = nitrate. The protein operates within nitrogen metabolism. Heme-binding protein able to scavenge peroxynitrite and to protect free L-tyrosine against peroxynitrite-mediated nitration, by acting as a peroxynitrite isomerase that converts peroxynitrite to nitrate. Therefore, this protein likely plays a role in peroxynitrite sensing and in the detoxification of reactive nitrogen and oxygen species (RNS and ROS, respectively). Is able to bind nitric oxide (NO) in vitro, but may act as a sensor of peroxynitrite levels in vivo. This chain is Peroxynitrite isomerase, found in Mycobacteroides abscessus (strain ATCC 19977 / DSM 44196 / CCUG 20993 / CIP 104536 / JCM 13569 / NCTC 13031 / TMC 1543 / L948) (Mycobacterium abscessus).